The following is a 324-amino-acid chain: Glyoxylate/hydroxypyruvate reductase B (324 aa).

Catalysis depends on residues R237 and E266. Residue H285 is the Proton donor of the active site.

The protein belongs to the D-isomer specific 2-hydroxyacid dehydrogenase family. GhrB subfamily. In terms of assembly, homodimer.

Its subcellular location is the cytoplasm. The catalysed reaction is glycolate + NADP(+) = glyoxylate + NADPH + H(+). It carries out the reaction (R)-glycerate + NAD(+) = 3-hydroxypyruvate + NADH + H(+). The enzyme catalyses (R)-glycerate + NADP(+) = 3-hydroxypyruvate + NADPH + H(+). In terms of biological role, catalyzes the NADPH-dependent reduction of glyoxylate and hydroxypyruvate into glycolate and glycerate, respectively. In Salmonella dublin (strain CT_02021853), this protein is Glyoxylate/hydroxypyruvate reductase B.